A 132-amino-acid chain; its full sequence is Replication enhancer protein (132 aa).

The protein belongs to the geminiviridae replication enhancer protein family. In terms of assembly, homooligomer. Interacts with the replication-associated protein (REP). Interacts with host proliferating cell nuclear antigen (PCNA). Interacts with host retinoblastoma-related protein 1 (RBR1), and may thereby deregulate the host cell cycle. Oligomerization and interaction with PCNA are necessary for optimal replication enhancement.

In terms of biological role, increases viral DNA accumulation. Enhances infectivity and symptom expression. This is Replication enhancer protein from Solanum lycopersicum (Tomato).